We begin with the raw amino-acid sequence, 347 residues long: MKQTIILLYGGRSAEREVSVLSAESVMRAVNYDRFTVKTFFISQSGDFIKTQEFSQTPGQEDRLMTNETIDWDKKVAPSAIYEERAVVFPVLHGPMGEDGSVQGFLEVLKMPYVGCNILSSSLAMDKITTKRVLESAGIAQVPYVAIVEGDDVTAKIAEVEEELTYPVFTKPSNMGSSVGISKSENQEELRQALKLAFQYDSRVLVEQGVNAREIEVGLLGNYDVKSTLPGEVVKDVAFYDYDAKYIDNKITMDIPAKISDDVVAVMRQNAETAFRAIGGLGLSRCDFFYTDKGEIFLNELNTMPGFTQWSMYPLLWDNMGITYPDLIERLVELAKESFDKREAHLL.

The ATP-grasp domain occupies 131-333; it reads KRVLESAGIA…YPDLIERLVE (203 aa). 161-216 is an ATP binding site; the sequence is EEELTYPVFTKPSNMGSSVGISKSENQEELRQALKLAFQYDSRVLVEQGVNAREIE. 3 residues coordinate Mg(2+): Asp-287, Glu-300, and Asn-302.

This sequence belongs to the D-alanine--D-alanine ligase family. It depends on Mg(2+) as a cofactor. Mn(2+) serves as cofactor.

It is found in the cytoplasm. The enzyme catalyses 2 D-alanine + ATP = D-alanyl-D-alanine + ADP + phosphate + H(+). Its pathway is cell wall biogenesis; peptidoglycan biosynthesis. Cell wall formation. The sequence is that of D-alanine--D-alanine ligase from Streptococcus pneumoniae (strain Hungary19A-6).